Here is a 460-residue protein sequence, read N- to C-terminus: Armadillo repeat-containing protein LFR (460 aa).

Residues 1-10 are compositionally biased toward low complexity; the sequence is MSHVRSAPAG. Residues 1–32 are disordered; sequence MSHVRSAPAGKSGGGGGSTPAKRGRPFGSTTG. ARM repeat units follow at residues 225–267, 321–360, and 364–405; these read ENET…NLAP, NEPF…NVAE, and DFRL…SLVS.

As to quaternary structure, interacts with CHR719, SWI3A and SWI3C. As to expression, expressed at low levels in coleoptiles, leaf tongues, mature leaves and nodes during the vegetative phase. Highly expressed in reproductive tissues such as young panicles, early developing seeds, embryos and endosperms.

Its subcellular location is the nucleus. Plays critical roles in both embryo and endosperm development. Required for free nuclei division and cellularization in early endosperm development, by preventing premature cell death in the endosperm. Involved in the regulation of pattern formation and organ differentiation during embryogenesis, by regulating genes involved in the early stages of seed development. The chain is Armadillo repeat-containing protein LFR from Oryza sativa subsp. japonica (Rice).